The chain runs to 416 residues: Leu/Ile/Val-binding protein homolog 4 (416 aa).

The first 26 residues, 1 to 26 (MSLKVFLQAGVACAALSLAGAAGASA), serve as a signal peptide directing secretion.

Belongs to the leucine-binding protein family.

Functionally, component of an amino-acid transport system. The polypeptide is Leu/Ile/Val-binding protein homolog 4 (Brucella abortus (strain 2308)).